The primary structure comprises 224 residues: uncharacterized protein (224 aa).

Residues Tyr-11–Lys-42 form a Matrin-type zinc finger. Low complexity predominate over residues Ala-67 to Ala-80. Disordered regions lie at residues Ala-67–Glu-158 and Val-172–Ser-224. The span at Lys-87–Lys-98 shows a compositional bias: basic residues. Low complexity predominate over residues Thr-108–Ser-122. Positions Lys-175–Glu-199 are enriched in basic and acidic residues. A compositionally biased stretch (basic residues) spans Val-203–Ser-216.

It localises to the nucleus. The protein resides in the nucleolus. This is an uncharacterized protein from Schizosaccharomyces pombe (strain 972 / ATCC 24843) (Fission yeast).